The primary structure comprises 323 residues: D-specific alpha-keto acid dehydrogenase (323 aa).

NAD(+)-binding positions include His-157–Ile-158, Thr-230–Arg-232, and Asp-256. Arg-232 is a catalytic residue. The active site involves Glu-261. His-293 serves as the catalytic Proton donor. Residue His-293–Tyr-296 participates in NAD(+) binding.

The protein belongs to the D-isomer specific 2-hydroxyacid dehydrogenase family.

In terms of biological role, required for high-level resistance to glycopeptides antibiotics. Catalyzes the reduction of 2-keto acids to 2-D-hydroxy acids that give rise to peptidoglycan precursors that terminate in the depsipeptide D-alanine-2-lactate rather than the dipeptide D-alanine-D-alanine thus preventing vancomycin binding. The protein is D-specific alpha-keto acid dehydrogenase (vanHB) of Enterococcus faecalis (strain ATCC 700802 / V583).